Here is a 199-residue protein sequence, read N- to C-terminus: NAD(P)H dehydrogenase (quinone) (199 aa).

The Flavodoxin-like domain occupies 4–190; that stretch reads VLVLYYSSYG…TGARYQGRKI (187 aa). Residues 10–15 and 78–80 each bind FMN; these read SSYGHL and TRF. NAD(+) is bound at residue tyrosine 12. Tryptophan 98 provides a ligand contact to substrate. FMN-binding positions include 113–119 and histidine 134; that span reads STATQHG.

It belongs to the WrbA family. The cofactor is FMN.

It catalyses the reaction a quinone + NADH + H(+) = a quinol + NAD(+). The enzyme catalyses a quinone + NADPH + H(+) = a quinol + NADP(+). The polypeptide is NAD(P)H dehydrogenase (quinone) (Caulobacter vibrioides (strain ATCC 19089 / CIP 103742 / CB 15) (Caulobacter crescentus)).